The chain runs to 208 residues: Ribonuclease HII (208 aa).

The RNase H type-2 domain maps to 17–208 (LRVCGIDEAG…SFRLRQLGEK (192 aa)). 3 residues coordinate a divalent metal cation: aspartate 23, glutamate 24, and aspartate 120.

It belongs to the RNase HII family. Mn(2+) serves as cofactor. The cofactor is Mg(2+).

It is found in the cytoplasm. It carries out the reaction Endonucleolytic cleavage to 5'-phosphomonoester.. Functionally, endonuclease that specifically degrades the RNA of RNA-DNA hybrids. The sequence is that of Ribonuclease HII from Chlorobium luteolum (strain DSM 273 / BCRC 81028 / 2530) (Pelodictyon luteolum).